We begin with the raw amino-acid sequence, 116 residues long: Large ribosomal subunit protein bL19 (116 aa).

This sequence belongs to the bacterial ribosomal protein bL19 family.

Its function is as follows. This protein is located at the 30S-50S ribosomal subunit interface and may play a role in the structure and function of the aminoacyl-tRNA binding site. In Clostridium botulinum (strain Eklund 17B / Type B), this protein is Large ribosomal subunit protein bL19.